Reading from the N-terminus, the 263-residue chain is uncharacterized protein (263 aa).

One can recognise a GST N-terminal domain in the interval 44 to 131 (QVYSLGTPNG…YLADKFNHLI (88 aa)). The GST C-terminal domain occupies 134–263 (DWAQRTEVLN…ALEVDYKAIK (130 aa)).

It belongs to the GST superfamily. As to quaternary structure, homodimer.

This is an uncharacterized protein from Streptococcus mutans serotype c (strain ATCC 700610 / UA159).